Consider the following 315-residue polypeptide: Glucokinase-like protein CC_3167 (315 aa).

This sequence belongs to the bacterial glucokinase family.

In Caulobacter vibrioides (strain ATCC 19089 / CIP 103742 / CB 15) (Caulobacter crescentus), this protein is Glucokinase-like protein CC_3167.